A 451-amino-acid polypeptide reads, in one-letter code: MAFQQSSPLVKFEASPAESFLSAPGDNFTSLFADSTPSTLNPRDMMTPDSVADIDSRLSVIPESQDAEDDESHSTSATAPSTSEKKPVKKRKSWGQVLPEPKTNLPPRKRAKTEDEKEQRRVERVLRNRRAAQSSRERKRLEVEALEKRNKELETLLINVQKTNLILVEELNRFRRSSGVVTRSSSPLDSLQDSITLSQQLFGSRDGQTMSNPEQSLMDQIMRSAANPTVNPASLSPSLPPISDKEFQTKEEDEEQADEDEEMEQTWHETKEAAAAKEKNSKQSRVSTDSTQRPAVSIGGDAAVPVFSDDAGANCLGLDPVHQDDGPFSIGHSFGLSAALDADRYLLESQLLASPNASTVDDDYLAGDSAACFTNPLPSDYDFDINDFLTDDANHAAYDIVAASNYAAADRELDLEIHDPENQIPSRHSIQQPQSGASSHGCDDGGIAVGV.

The interval 1–137 is disordered; it reads MAFQQSSPLV…NRRAAQSSRE (137 aa). A compositionally biased stretch (polar residues) spans 27–41; that stretch reads NFTSLFADSTPSTLN. Residues 112–126 show a composition bias toward basic and acidic residues; it reads KTEDEKEQRRVERVL. In terms of domain architecture, bZIP spans 118–181; it reads EQRRVERVLR…NRFRRSSGVV (64 aa). The tract at residues 120 to 140 is basic motif; the sequence is RRVERVLRNRRAAQSSRERKR. The tract at residues 146–153 is leucine-zipper; it reads LEKRNKEL. The disordered stretch occupies residues 228–296; sequence PTVNPASLSP…STDSTQRPAV (69 aa). Positions 251 to 264 are enriched in acidic residues; it reads EEDEEQADEDEEME. Positions 265–281 are enriched in basic and acidic residues; the sequence is QTWHETKEAAAAKEKNS. Polar residues predominate over residues 283–294; that stretch reads QSRVSTDSTQRP.

This sequence belongs to the bZIP family. Homodimer.

The protein localises to the nucleus. In terms of biological role, transcriptional activator involved in the unfolded protein response (UPR) pathway. Recognizes and binds to the UPR element (UPRE) in the promoter of UPR-regulated genes. Increases the synthesis of endoplasmic reticulum-resident proteins required for protein folding as well as components of the secretory pathway. This Hypocrea jecorina (Trichoderma reesei) protein is Transcriptional activator hac1 (hac1).